Consider the following 353-residue polypeptide: Ribosomal RNA small subunit methyltransferase H (353 aa).

Residues 39–41, D58, F90, D108, and Q115 contribute to the S-adenosyl-L-methionine site; that span reads AGH. The interval 334-353 is disordered; that stretch reads SEDGVRGAHGHRRRTQARRG. Basic residues predominate over residues 341–353; the sequence is AHGHRRRTQARRG.

Belongs to the methyltransferase superfamily. RsmH family.

It localises to the cytoplasm. The catalysed reaction is cytidine(1402) in 16S rRNA + S-adenosyl-L-methionine = N(4)-methylcytidine(1402) in 16S rRNA + S-adenosyl-L-homocysteine + H(+). Functionally, specifically methylates the N4 position of cytidine in position 1402 (C1402) of 16S rRNA. This is Ribosomal RNA small subunit methyltransferase H from Bifidobacterium animalis subsp. lactis (strain AD011).